The sequence spans 95 residues: Aspartyl/glutamyl-tRNA(Asn/Gln) amidotransferase subunit C (95 aa).

The protein belongs to the GatC family. Heterotrimer of A, B and C subunits.

It carries out the reaction L-glutamyl-tRNA(Gln) + L-glutamine + ATP + H2O = L-glutaminyl-tRNA(Gln) + L-glutamate + ADP + phosphate + H(+). It catalyses the reaction L-aspartyl-tRNA(Asn) + L-glutamine + ATP + H2O = L-asparaginyl-tRNA(Asn) + L-glutamate + ADP + phosphate + 2 H(+). Functionally, allows the formation of correctly charged Asn-tRNA(Asn) or Gln-tRNA(Gln) through the transamidation of misacylated Asp-tRNA(Asn) or Glu-tRNA(Gln) in organisms which lack either or both of asparaginyl-tRNA or glutaminyl-tRNA synthetases. The reaction takes place in the presence of glutamine and ATP through an activated phospho-Asp-tRNA(Asn) or phospho-Glu-tRNA(Gln). The sequence is that of Aspartyl/glutamyl-tRNA(Asn/Gln) amidotransferase subunit C from Magnetococcus marinus (strain ATCC BAA-1437 / JCM 17883 / MC-1).